Consider the following 145-residue polypeptide: Maximins 5/H4 type 1 (145 aa).

An N-terminal signal peptide occupies residues 1–18 (MNFKYIVAVSFLIASAYA). 2 propeptides span residues 19-43 (RSVQ…REIR) and 74-124 (TAEE…KEKR). Leucine amide is present on Leu144.

It belongs to the bombinin family. As to expression, expressed by the skin glands.

Its subcellular location is the secreted. Functionally, maximin-5 shows antibacterial activity against both Gram-positive and Gram-negative bacteria. The only exception is the resistance of E.coli. Also shows antimicrobial activity against fungi C.albicans, A.flavus and P.uticale. It has little hemolytic activity. It does not possess a significant cytotoxicity against tumor cell lines. It does not possess a significant anti-HIV activity. In terms of biological role, maximin-H4 shows antibacterial activity against both Gram-positive and Gram-negative bacteria. It also shows antimicrobial activity against the fungus C.albicans. Shows strong hemolytic activity. This Bombina maxima (Giant fire-bellied toad) protein is Maximins 5/H4 type 1.